A 92-amino-acid chain; its full sequence is Long neurotoxin 73 (92 aa).

The N-terminal stretch at 1 to 21 (MKTLLLTLVVVTIVCLDLGDS) is a signal peptide. 5 disulfides stabilise this stretch: Cys-24–Cys-41, Cys-34–Cys-62, Cys-47–Cys-51, Cys-66–Cys-77, and Cys-78–Cys-83.

This sequence belongs to the three-finger toxin family. Long-chain subfamily. Type II alpha-neurotoxin sub-subfamily. In terms of tissue distribution, expressed by the venom gland.

It is found in the secreted. Its function is as follows. Binds with high affinity to muscular (alpha-1/CHRNA1) and neuronal (alpha-7/CHRNA7) nicotinic acetylcholine receptor (nAChR) and inhibits acetylcholine from binding to the receptor, thereby impairing neuromuscular and neuronal transmission. This Drysdalia coronoides (White-lipped snake) protein is Long neurotoxin 73.